Reading from the N-terminus, the 96-residue chain is Small ribosomal subunit protein bS6 (96 aa).

The protein belongs to the bacterial ribosomal protein bS6 family.

Its function is as follows. Binds together with bS18 to 16S ribosomal RNA. In Corynebacterium aurimucosum (strain ATCC 700975 / DSM 44827 / CIP 107346 / CN-1) (Corynebacterium nigricans), this protein is Small ribosomal subunit protein bS6.